The primary structure comprises 737 residues: Dual specificity protein kinase KNS1 (737 aa).

Disordered regions lie at residues 1–33 and 270–290; these read MSQN…SSNK and SSLR…NKSN. Over residues 15–33 the composition is skewed to polar residues; it reads ANMNNSTTTGPANNTSSNK. Positions 277-290 are enriched in low complexity; sequence SNGSSESASSNKSN. Positions 313–720 constitute a Protein kinase domain; the sequence is FVVKDLLGQG…AKDALDHEWF (408 aa). ATP contacts are provided by residues 319–327 and K343; that span reads LGQGTFGKV. The active-site Proton acceptor is the D440. T562 bears the Phosphothreonine mark.

Belongs to the protein kinase superfamily. CMGC Ser/Thr protein kinase family. Lammer subfamily. Phosphorylated (auto-) on Ser/Thr/Tyr.

The enzyme catalyses L-seryl-[protein] + ATP = O-phospho-L-seryl-[protein] + ADP + H(+). It carries out the reaction L-threonyl-[protein] + ATP = O-phospho-L-threonyl-[protein] + ADP + H(+). It catalyses the reaction L-tyrosyl-[protein] + ATP = O-phospho-L-tyrosyl-[protein] + ADP + H(+). Nonessential protein kinase. The protein is Dual specificity protein kinase KNS1 (KNS1) of Saccharomyces cerevisiae (strain ATCC 204508 / S288c) (Baker's yeast).